The sequence spans 148 residues: SsrA-binding protein (148 aa).

Residues 129 to 142 (ETEKKRDWEREKAR) are compositionally biased toward basic and acidic residues. The interval 129 to 148 (ETEKKRDWEREKARIMRAGT) is disordered.

This sequence belongs to the SmpB family.

Its subcellular location is the cytoplasm. Functionally, required for rescue of stalled ribosomes mediated by trans-translation. Binds to transfer-messenger RNA (tmRNA), required for stable association of tmRNA with ribosomes. tmRNA and SmpB together mimic tRNA shape, replacing the anticodon stem-loop with SmpB. tmRNA is encoded by the ssrA gene; the 2 termini fold to resemble tRNA(Ala) and it encodes a 'tag peptide', a short internal open reading frame. During trans-translation Ala-aminoacylated tmRNA acts like a tRNA, entering the A-site of stalled ribosomes, displacing the stalled mRNA. The ribosome then switches to translate the ORF on the tmRNA; the nascent peptide is terminated with the 'tag peptide' encoded by the tmRNA and targeted for degradation. The ribosome is freed to recommence translation, which seems to be the essential function of trans-translation. This Burkholderia lata (strain ATCC 17760 / DSM 23089 / LMG 22485 / NCIMB 9086 / R18194 / 383) protein is SsrA-binding protein.